Here is a 196-residue protein sequence, read N- to C-terminus: Elongation factor Ts (196 aa).

Positions 80-83 (TDFV) are involved in Mg(2+) ion dislocation from EF-Tu.

This sequence belongs to the EF-Ts family.

Its subcellular location is the cytoplasm. In terms of biological role, associates with the EF-Tu.GDP complex and induces the exchange of GDP to GTP. It remains bound to the aminoacyl-tRNA.EF-Tu.GTP complex up to the GTP hydrolysis stage on the ribosome. The protein is Elongation factor Ts of Thermosipho melanesiensis (strain DSM 12029 / CIP 104789 / BI429).